Consider the following 2082-residue polypeptide: Polyketide synthase ThaQ (2082 aa).

Residues 398–468 form a disordered region; that stretch reads NDARRAGSAR…DSAHDSAHAA (71 aa). 3 stretches are compositionally biased toward basic and acidic residues: residues 399-411, 419-430, and 439-468; these read DARRAGSARRDAR, HGARHEAAHDAQ, and ADAHDSAHDSAHDSAHDSAHDSAHDSAHAA. The 77-residue stretch at 470-546 folds into the Carrier 1 domain; that stretch reads ALRREGRAYL…ALLDHLLAAH (77 aa). Serine 507 carries the post-translational modification O-(pantetheine 4'-phosphoryl)serine. Low complexity-rich tracts occupy residues 560-582 and 593-605; these read APARGVGARAQAAQASGEGRAAP and DTPSSAPSSAPAR. Positions 560–655 are disordered; it reads APARGVGARA…RYAPRAPHPD (96 aa). Positions 606–631 are enriched in pro residues; that stretch reads PDQPAPSGPPAQPAQPAPRADTPPPA. Residues 658–1077 form the Ketosynthase family 3 (KS3) domain; sequence AEPVAIIGIS…GVNAHVVLEE (420 aa). Disordered regions lie at residues 1250 to 1269 and 1603 to 1653; these read APGTRHASAGEATEAAEAAE and ARGP…VKSD. Low complexity-rich tracts occupy residues 1256–1269 and 1612–1624; these read ASAGEATEAAEAAE and SPDAQPPAARAQA. The span at 1640-1653 shows a compositional bias: basic and acidic residues; sequence ADSKAGPKSEVKSD. Positions 1669–1743 constitute a Carrier 2 domain; that stretch reads ASVAASVEDA…ALVRAVAEAV (75 aa). An O-(pantetheine 4'-phosphoryl)serine modification is found at serine 1703. Positions 1792–2022 constitute an AB hydrolase-1 domain; sequence PRVVLIPGLG…GAGHAVFLTH (231 aa). The span at 2045–2067 shows a compositional bias: low complexity; the sequence is GAAESVESVEATEAAEAARSPAV. The interval 2045–2082 is disordered; it reads GAAESVESVEATEAAEAARSPAVARRRATDDAPVGSDA.

It depends on pantetheine 4'-phosphate as a cofactor.

The protein resides in the cytoplasm. It functions in the pathway antibiotic biosynthesis. Functionally, involved in production of the polyketide antibiotic thailandamide. In Burkholderia thailandensis (strain ATCC 700388 / DSM 13276 / CCUG 48851 / CIP 106301 / E264), this protein is Polyketide synthase ThaQ.